The sequence spans 470 residues: ATP synthase subunit beta (470 aa).

158-165 (GGAGVGKT) is an ATP binding site.

This sequence belongs to the ATPase alpha/beta chains family. F-type ATPases have 2 components, CF(1) - the catalytic core - and CF(0) - the membrane proton channel. CF(1) has five subunits: alpha(3), beta(3), gamma(1), delta(1), epsilon(1). CF(0) has three main subunits: a(1), b(2) and c(9-12). The alpha and beta chains form an alternating ring which encloses part of the gamma chain. CF(1) is attached to CF(0) by a central stalk formed by the gamma and epsilon chains, while a peripheral stalk is formed by the delta and b chains.

Its subcellular location is the cell membrane. It catalyses the reaction ATP + H2O + 4 H(+)(in) = ADP + phosphate + 5 H(+)(out). In terms of biological role, produces ATP from ADP in the presence of a proton gradient across the membrane. The catalytic sites are hosted primarily by the beta subunits. This Shouchella clausii (strain KSM-K16) (Alkalihalobacillus clausii) protein is ATP synthase subunit beta.